A 597-amino-acid chain; its full sequence is Cysteine/serine-rich nuclear protein 3 (597 aa).

Disordered regions lie at residues 22–64 (EDVD…TPSS) and 348–407 (CQGD…GFVE). Positions 42-52 (SSESADSGDSV) are enriched in low complexity. The segment covering 53–64 (NPSTSNHFTPSS) has biased composition (polar residues). A compositionally biased stretch (acidic residues) spans 348–359 (CQGDEEEEEEDG). Positions 361 to 376 (SFCSGATDSSTQSLAP) are enriched in polar residues. The span at 378–401 (ESDEEEEEEEEEEEEEEEDDDDDK) shows a compositional bias: acidic residues.

It belongs to the AXUD1 family. Detected only in the brain of 15 dpc, 18 dpc, newborn and P6 mice (at protein level).

The protein resides in the nucleus. In terms of biological role, binds to the consensus sequence 5'-AGAGTG-3' and has transcriptional activator activity. Plays a role in apoptosis. In Mus musculus (Mouse), this protein is Cysteine/serine-rich nuclear protein 3 (Csrnp3).